A 348-amino-acid polypeptide reads, in one-letter code: MSEKMVAIMKTKPEYGAELVEVDVPKPGPGEVLIKILATSICGTDLHIYEWNEWAQTRIRPPQIMGHEVAGEVVEVGPGVEGIEVGDYVSVETHIVCGKCYACKRGQYHVCQNTKIFGVDTDGVFAEYAVVPAQNVWKNPKNIPPEYATLQEPLGNAVDTVLAGPIAGKSVLITGAGPLGLLGIAVAKASGAYPVIVSEPSEFRRNLAKKVGADYVINPFEEDVVKEVMDITDGNGVDVFLEFSGAPKALEQGLQAVTPAGRVSLLGLFPGKVSIDFNNLIIFKALTVYGITGRHLWETWYTVSRLLQSGKLNIDPIITHKYKGFDKYEEAFELMRAGKTGKVVFMLK.

Cysteine 42 provides a ligand contact to Zn(2+). Catalysis depends on charge relay system residues threonine 44 and histidine 47. Zn(2+) is bound by residues histidine 67, glutamate 68, cysteine 97, cysteine 100, cysteine 103, and cysteine 111. Residues leucine 179, glutamate 199, arginine 204, 266–268 (LGL), and 291–292 (IT) contribute to the NAD(+) site.

It belongs to the zinc-containing alcohol dehydrogenase family. As to quaternary structure, homotetramer. Zn(2+) serves as cofactor.

It localises to the cytoplasm. It catalyses the reaction L-threonine + NAD(+) = (2S)-2-amino-3-oxobutanoate + NADH + H(+). Its pathway is amino-acid degradation; L-threonine degradation via oxydo-reductase pathway; glycine from L-threonine: step 1/2. In terms of biological role, catalyzes the NAD(+)-dependent oxidation of L-threonine to 2-amino-3-ketobutyrate. To a lesser extent, also catalyzes the oxidation of L-serine, D-threonine, butan-2,3-diol, butan-1,2-diol, and propan-1,2-diol and cannot oxidize other L-amino acids. Cannot utilize NADP(H) instead of NAD(H). The polypeptide is L-threonine 3-dehydrogenase (Pyrococcus furiosus (strain ATCC 43587 / DSM 3638 / JCM 8422 / Vc1)).